Consider the following 162-residue polypeptide: Transcription elongation factor GreA (162 aa).

The stretch at 44-72 (ENAEYHAAKEKQSHIERRIAELSDILSRA) forms a coiled coil.

This sequence belongs to the GreA/GreB family.

Necessary for efficient RNA polymerase transcription elongation past template-encoded arresting sites. The arresting sites in DNA have the property of trapping a certain fraction of elongating RNA polymerases that pass through, resulting in locked ternary complexes. Cleavage of the nascent transcript by cleavage factors such as GreA or GreB allows the resumption of elongation from the new 3'terminus. GreA releases sequences of 2 to 3 nucleotides. In Nautilia profundicola (strain ATCC BAA-1463 / DSM 18972 / AmH), this protein is Transcription elongation factor GreA.